The chain runs to 479 residues: GTPase Obg (479 aa).

The region spanning 2–159 (PRFVDRVVIH…RDLTLELKTV (158 aa)) is the Obg domain. Residues 160-340 (ADVGLVGFPS…LIFGLSQMIS (181 aa)) enclose the OBG-type G domain. Residues 166 to 173 (GFPSAGKS), 191 to 195 (FTTLV), 212 to 215 (DVPG), 292 to 295 (NKID), and 321 to 323 (STA) each bind GTP. Mg(2+) is bound by residues serine 173 and threonine 193. The OCT domain maps to 358 to 436 (PIPVDDSGFT…IGEMTFDWEP (79 aa)). The disordered stretch occupies residues 434-479 (WEPQTPAGEPVAMSGRGTDPRLDSNKRVGAAERKAARSRRREHGDG). Residues 451–468 (TDPRLDSNKRVGAAERKA) show a composition bias toward basic and acidic residues. A compositionally biased stretch (basic residues) spans 469-479 (ARSRRREHGDG).

This sequence belongs to the TRAFAC class OBG-HflX-like GTPase superfamily. OBG GTPase family. As to quaternary structure, monomer. The cofactor is Mg(2+).

The protein localises to the cytoplasm. An essential GTPase which binds GTP, GDP and possibly (p)ppGpp with moderate affinity, with high nucleotide exchange rates and a fairly low GTP hydrolysis rate. Plays a role in control of the cell cycle, stress response, ribosome biogenesis and in those bacteria that undergo differentiation, in morphogenesis control. This Mycobacterium tuberculosis (strain ATCC 25177 / H37Ra) protein is GTPase Obg.